The following is a 380-amino-acid chain: Cytochrome b (380 aa).

The next 4 helical transmembrane spans lie at 34 to 54 (FGSL…LLAT), 78 to 99 (WLIR…YLHI), 114 to 134 (WNTG…GYVL), and 179 to 199 (FFAL…IHLA). Residues histidine 84 and histidine 98 each coordinate heme b. The heme b site is built by histidine 183 and histidine 197. Residue histidine 202 participates in a ubiquinone binding. 4 consecutive transmembrane segments (helical) span residues 227–247 (LKDI…ALFS), 289–309 (LGGV…PFLH), 321–341 (LSQI…WIGS), and 348–368 (FIII…ILFP).

This sequence belongs to the cytochrome b family. In terms of assembly, the cytochrome bc1 complex contains 11 subunits: 3 respiratory subunits (MT-CYB, CYC1 and UQCRFS1), 2 core proteins (UQCRC1 and UQCRC2) and 6 low-molecular weight proteins (UQCRH/QCR6, UQCRB/QCR7, UQCRQ/QCR8, UQCR10/QCR9, UQCR11/QCR10 and a cleavage product of UQCRFS1). This cytochrome bc1 complex then forms a dimer. The cofactor is heme b.

Its subcellular location is the mitochondrion inner membrane. Component of the ubiquinol-cytochrome c reductase complex (complex III or cytochrome b-c1 complex) that is part of the mitochondrial respiratory chain. The b-c1 complex mediates electron transfer from ubiquinol to cytochrome c. Contributes to the generation of a proton gradient across the mitochondrial membrane that is then used for ATP synthesis. The protein is Cytochrome b (MT-CYB) of Callipepla gambelii (Gambel's quail).